The following is a 507-amino-acid chain: ATP synthase subunit alpha (507 aa).

Residues 118–141 are disordered; the sequence is VDGLGPIETTETRPIESPAPGVMD. Position 172–179 (172–179) interacts with ATP; that stretch reads GDRQTGKT.

The protein belongs to the ATPase alpha/beta chains family. F-type ATPases have 2 components, CF(1) - the catalytic core - and CF(0) - the membrane proton channel. CF(1) has five subunits: alpha(3), beta(3), gamma(1), delta(1), epsilon(1). CF(0) has three main subunits: a(1), b(2) and c(9-12). The alpha and beta chains form an alternating ring which encloses part of the gamma chain. CF(1) is attached to CF(0) by a central stalk formed by the gamma and epsilon chains, while a peripheral stalk is formed by the delta and b chains.

It localises to the cell membrane. The enzyme catalyses ATP + H2O + 4 H(+)(in) = ADP + phosphate + 5 H(+)(out). Produces ATP from ADP in the presence of a proton gradient across the membrane. The alpha chain is a regulatory subunit. In Anoxybacillus flavithermus (strain DSM 21510 / WK1), this protein is ATP synthase subunit alpha.